Consider the following 539-residue polypeptide: Phosphoenolpyruvate carboxykinase (ATP) (539 aa).

The substrate site is built by Arg-64, Tyr-206, and Lys-212. ATP contacts are provided by residues Lys-212, His-231, and 247–255 (GLSGTGKTT). Mn(2+)-binding residues include Lys-212 and His-231. Mn(2+) is bound at residue Asp-268. ATP contacts are provided by residues Glu-296, Arg-332, 448–449 (RI), and Thr-454. Arg-332 provides a ligand contact to substrate.

This sequence belongs to the phosphoenolpyruvate carboxykinase (ATP) family. Monomer. Mn(2+) is required as a cofactor.

Its subcellular location is the cytoplasm. It carries out the reaction oxaloacetate + ATP = phosphoenolpyruvate + ADP + CO2. Its pathway is carbohydrate biosynthesis; gluconeogenesis. Its function is as follows. Involved in the gluconeogenesis. Catalyzes the conversion of oxaloacetate (OAA) to phosphoenolpyruvate (PEP) through direct phosphoryl transfer between the nucleoside triphosphate and OAA. The protein is Phosphoenolpyruvate carboxykinase (ATP) of Edwardsiella ictaluri (strain 93-146).